The primary structure comprises 30 residues: Circulin A (30 aa).

The segment at residues 1 to 30 (GIPCGESCVWIPCISAALGCSCKNKVCYRN) is a cross-link (cyclopeptide (Gly-Asn)). Intrachain disulfides connect Cys4–Cys20, Cys8–Cys22, and Cys13–Cys27.

This is a cyclic peptide. As to expression, expressed in fruit, pedicel, root and stem but not in leaf (at protein level).

Its function is as follows. Probably participates in a plant defense mechanism. This is Circulin A from Chassalia chartacea (Chassalia curviflora).